A 105-amino-acid polypeptide reads, in one-letter code: Phosphoribosyl-AMP cyclohydrolase (105 aa).

Asp-72 serves as a coordination point for Mg(2+). Cys-73 contributes to the Zn(2+) binding site. The Mg(2+) site is built by Asp-74 and Asp-76. Zn(2+) is bound by residues Cys-89 and Cys-96.

The protein belongs to the PRA-CH family. Homodimer. The cofactor is Mg(2+). It depends on Zn(2+) as a cofactor.

It localises to the cytoplasm. The enzyme catalyses 1-(5-phospho-beta-D-ribosyl)-5'-AMP + H2O = 1-(5-phospho-beta-D-ribosyl)-5-[(5-phospho-beta-D-ribosylamino)methylideneamino]imidazole-4-carboxamide. Its pathway is amino-acid biosynthesis; L-histidine biosynthesis; L-histidine from 5-phospho-alpha-D-ribose 1-diphosphate: step 3/9. In terms of biological role, catalyzes the hydrolysis of the adenine ring of phosphoribosyl-AMP. The protein is Phosphoribosyl-AMP cyclohydrolase of Listeria monocytogenes serotype 4b (strain CLIP80459).